The sequence spans 1058 residues: Carbamoyl phosphate synthase large chain (1058 aa).

The tract at residues 1-401 is carboxyphosphate synthetic domain; the sequence is MPKRTDIKKI…SLLKACRSLE (401 aa). R129, R169, G175, G176, K208, I210, E215, G241, I242, H243, Q284, and E298 together coordinate ATP. The ATP-grasp 1 domain maps to 133–327; sequence KALMKALKQP…IAKIAAKIAI (195 aa). 3 residues coordinate Mg(2+): Q284, E298, and N300. Positions 284, 298, and 300 each coordinate Mn(2+). The segment at 402–546 is oligomerization domain; that stretch reads IGIYHNECKE…YSTYAFENES (145 aa). The interval 547–929 is carbamoyl phosphate synthetic domain; sequence QASPNKSILV…ALYKAFEASY (383 aa). In terms of domain architecture, ATP-grasp 2 spans 671 to 861; the sequence is EKALHDINIP…MAQVATKLIL (191 aa). ATP contacts are provided by R707, S746, I748, E752, G777, V778, H779, S780, Q820, and E832. Residues Q820, E832, and N834 each coordinate Mg(2+). The Mn(2+) site is built by Q820, E832, and N834. In terms of domain architecture, MGS-like spans 930 to 1058; sequence MHVPDFGNII…ESRSFSIQSL (129 aa). An allosteric domain region spans residues 930-1058; sequence MHVPDFGNII…ESRSFSIQSL (129 aa).

It belongs to the CarB family. As to quaternary structure, composed of two chains; the small (or glutamine) chain promotes the hydrolysis of glutamine to ammonia, which is used by the large (or ammonia) chain to synthesize carbamoyl phosphate. Tetramer of heterodimers (alpha,beta)4. Requires Mg(2+) as cofactor. Mn(2+) is required as a cofactor.

The catalysed reaction is hydrogencarbonate + L-glutamine + 2 ATP + H2O = carbamoyl phosphate + L-glutamate + 2 ADP + phosphate + 2 H(+). It carries out the reaction hydrogencarbonate + NH4(+) + 2 ATP = carbamoyl phosphate + 2 ADP + phosphate + 2 H(+). It participates in amino-acid biosynthesis; L-arginine biosynthesis; carbamoyl phosphate from bicarbonate: step 1/1. Its pathway is pyrimidine metabolism; UMP biosynthesis via de novo pathway; (S)-dihydroorotate from bicarbonate: step 1/3. In terms of biological role, large subunit of the glutamine-dependent carbamoyl phosphate synthetase (CPSase). CPSase catalyzes the formation of carbamoyl phosphate from the ammonia moiety of glutamine, carbonate, and phosphate donated by ATP, constituting the first step of 2 biosynthetic pathways, one leading to arginine and/or urea and the other to pyrimidine nucleotides. The large subunit (synthetase) binds the substrates ammonia (free or transferred from glutamine from the small subunit), hydrogencarbonate and ATP and carries out an ATP-coupled ligase reaction, activating hydrogencarbonate by forming carboxy phosphate which reacts with ammonia to form carbamoyl phosphate. The protein is Carbamoyl phosphate synthase large chain of Streptococcus uberis (strain ATCC BAA-854 / 0140J).